The sequence spans 310 residues: Cytochrome f (310 aa).

Positions 1–26 (MNIKLTLLVLISIINLMIIQPIQTLA) are cleaved as a signal peptide. Positions 27, 47, 50, and 51 each coordinate heme. The helical transmembrane segment at 276–296 (IKGMIVFFFTVTIAQIFFVLK) threads the bilayer.

It belongs to the cytochrome f family. In terms of assembly, the 4 large subunits of the cytochrome b6-f complex are cytochrome b6, subunit IV (17 kDa polypeptide, petD), cytochrome f and the Rieske protein, while the 4 small subunits are PetG, PetL, PetM and PetN. The complex functions as a dimer. Heme serves as cofactor.

The protein resides in the plastid. It localises to the chloroplast thylakoid membrane. Its function is as follows. Component of the cytochrome b6-f complex, which mediates electron transfer between photosystem II (PSII) and photosystem I (PSI), cyclic electron flow around PSI, and state transitions. This is Cytochrome f from Gracilaria tenuistipitata var. liui (Red alga).